The sequence spans 772 residues: Metabotropic glutamate receptor-like protein G (772 aa).

Positions M1–G23 are cleaved as a signal peptide. The Extracellular portion of the chain corresponds to V24 to Q391. 6 N-linked (GlcNAc...) asparagine glycosylation sites follow: N73, N126, N262, N313, N343, and N378. A helical membrane pass occupies residues I392–V412. Residues Y413–P426 lie on the Cytoplasmic side of the membrane. Residues I427–V447 traverse the membrane as a helical segment. Residues S448 to T463 lie on the Extracellular side of the membrane. The chain crosses the membrane as a helical span at residues L464 to F484. At D485–Y500 the chain is on the cytoplasmic side. The chain crosses the membrane as a helical span at residues P501–G521. Over D522–S551 the chain is Extracellular. N546 carries N-linked (GlcNAc...) asparagine glycosylation. The chain crosses the membrane as a helical span at residues V552–W572. Residues K573–R586 are Cytoplasmic-facing. A helical transmembrane segment spans residues A587 to I607. The Extracellular portion of the chain corresponds to S608–T616. Residues I617–P637 traverse the membrane as a helical segment. Residues K638–D772 are Cytoplasmic-facing. The interval T664–D772 is disordered. Acidic residues predominate over residues F718 to E728. Positions P740–E753 are enriched in low complexity. Over residues Q754–Q763 the composition is skewed to pro residues.

It in the N-terminal section; belongs to the BMP lipoprotein family. This sequence in the C-terminal section; belongs to the G-protein coupled receptor 3 family. GABA-B receptor subfamily.

The protein localises to the membrane. The chain is Metabotropic glutamate receptor-like protein G (grlG) from Dictyostelium discoideum (Social amoeba).